Here is a 565-residue protein sequence, read N- to C-terminus: Mediator of RNA polymerase II transcription subunit 1 (565 aa).

A disordered region spans residues 141 to 170 (SGNNLGSGNGTNGSSLTNKTDKKSVSSGNG).

This sequence belongs to the Mediator complex subunit 1 family. As to quaternary structure, component of the Mediator complex.

It is found in the nucleus. Its function is as follows. Component of the Mediator complex, a coactivator involved in the regulated transcription of nearly all RNA polymerase II-dependent genes. Mediator functions as a bridge to convey information from gene-specific regulatory proteins to the basal RNA polymerase II transcription machinery. Mediator is recruited to promoters by direct interactions with regulatory proteins and serves as a scaffold for the assembly of a functional preinitiation complex with RNA polymerase II and the general transcription factors. The protein is Mediator of RNA polymerase II transcription subunit 1 (MED1) of Candida glabrata (strain ATCC 2001 / BCRC 20586 / JCM 3761 / NBRC 0622 / NRRL Y-65 / CBS 138) (Yeast).